Reading from the N-terminus, the 107-residue chain is Ornithine carbamoyltransferase, catabolic (107 aa).

Residues 57–61 (STRTR) and Gln-84 each bind carbamoyl phosphate.

The protein belongs to the aspartate/ornithine carbamoyltransferase superfamily. OTCase family.

The protein resides in the cytoplasm. The enzyme catalyses carbamoyl phosphate + L-ornithine = L-citrulline + phosphate + H(+). The protein operates within amino-acid degradation; L-arginine degradation via ADI pathway; carbamoyl phosphate from L-arginine: step 2/2. The sequence is that of Ornithine carbamoyltransferase, catabolic (arcB) from Streptococcus pyogenes.